The primary structure comprises 543 residues: Probable bifunctional tRNA threonylcarbamoyladenosine biosynthesis protein (543 aa).

Residues 1–329 are kae1; that stretch reads MDISKDLICI…YRSDMVEVNW (329 aa). Residues H112, H116, and Y133 each contribute to the Fe cation site. Residues 133 to 137, D165, G178, E182, and N262 each bind L-threonylcarbamoyladenylate; that span reads YVSGG. Position 290 (D290) interacts with Fe cation. Positions 342–543 constitute a Protein kinase domain; the sequence is IIPEHLIGKG…KEVEKRARYL (202 aa). ATP is bound by residues 348-356 and K369; that span reads IGKGAEADI. The Proton acceptor; for kinase activity role is filled by D461.

In the N-terminal section; belongs to the KAE1 / TsaD family. The protein in the C-terminal section; belongs to the protein kinase superfamily. Tyr protein kinase family. BUD32 subfamily. In terms of assembly, component of the KEOPS complex that consists of Kae1, Bud32, Cgi121 and Pcc1; the whole complex dimerizes. Fe(2+) is required as a cofactor.

Its subcellular location is the cytoplasm. It carries out the reaction L-seryl-[protein] + ATP = O-phospho-L-seryl-[protein] + ADP + H(+). The catalysed reaction is L-threonyl-[protein] + ATP = O-phospho-L-threonyl-[protein] + ADP + H(+). It catalyses the reaction L-threonylcarbamoyladenylate + adenosine(37) in tRNA = N(6)-L-threonylcarbamoyladenosine(37) in tRNA + AMP + H(+). Its function is as follows. Required for the formation of a threonylcarbamoyl group on adenosine at position 37 (t(6)A37) in tRNAs that read codons beginning with adenine. Is a component of the KEOPS complex that is probably involved in the transfer of the threonylcarbamoyl moiety of threonylcarbamoyl-AMP (TC-AMP) to the N6 group of A37. The Kae1 domain likely plays a direct catalytic role in this reaction. The Bud32 domain probably displays kinase activity that regulates Kae1 function. The protein is Probable bifunctional tRNA threonylcarbamoyladenosine biosynthesis protein of Methanococcus maripaludis (strain C6 / ATCC BAA-1332).